The sequence spans 116 residues: Ino eighty subunit 4 (116 aa).

Residues 1–15 (MSQESSVLSESQEQL) are compositionally biased toward low complexity. Disordered regions lie at residues 1–40 (MSQE…PVLP) and 70–116 (EERQ…GLDS). Basic and acidic residues predominate over residues 84–108 (KGSDDKATRKKEPADEDPEVKQLEK).

In terms of assembly, component of the chromatin-remodeling INO80 complex, at least composed of ARP4, ARP5, ARP8, RVB1, RVB2, TAF14, NHP10, IES1, IES3, IES4, IES6, ACT1, IES2, IES5 and INO80.

The protein resides in the nucleus. The chain is Ino eighty subunit 4 (IES4) from Saccharomyces cerevisiae (strain ATCC 204508 / S288c) (Baker's yeast).